A 260-amino-acid polypeptide reads, in one-letter code: Triosephosphate isomerase (260 aa).

Residue 11–13 coordinates substrate; sequence NWK. H103 functions as the Electrophile in the catalytic mechanism. The active-site Proton acceptor is the E175. Residues G181, S220, and 241-242 contribute to the substrate site; that span reads GG.

It belongs to the triosephosphate isomerase family. Homodimer.

The protein resides in the cytoplasm. The enzyme catalyses D-glyceraldehyde 3-phosphate = dihydroxyacetone phosphate. The protein operates within carbohydrate biosynthesis; gluconeogenesis. It functions in the pathway carbohydrate degradation; glycolysis; D-glyceraldehyde 3-phosphate from glycerone phosphate: step 1/1. Its function is as follows. Involved in the gluconeogenesis. Catalyzes stereospecifically the conversion of dihydroxyacetone phosphate (DHAP) to D-glyceraldehyde-3-phosphate (G3P). This is Triosephosphate isomerase from Shewanella woodyi (strain ATCC 51908 / MS32).